The sequence spans 130 residues: Small ribosomal subunit protein uS8 (130 aa).

This sequence belongs to the universal ribosomal protein uS8 family. As to quaternary structure, part of the 30S ribosomal subunit.

Functionally, one of the primary rRNA binding proteins, it binds directly to 16S rRNA central domain where it helps coordinate assembly of the platform of the 30S subunit. The polypeptide is Small ribosomal subunit protein uS8 (rps8) (Methanocaldococcus jannaschii (strain ATCC 43067 / DSM 2661 / JAL-1 / JCM 10045 / NBRC 100440) (Methanococcus jannaschii)).